We begin with the raw amino-acid sequence, 1041 residues long: Leucine-rich repeat receptor-like protein kinase TDR (1041 aa).

The first 29 residues, 1-29 (MKKKNISPSLVLHPLLLLLLPFFAFNSLA), serve as a signal peptide directing secretion. Over 30–652 (LKFSPQLLSL…HHKEERPKKT (623 aa)) the chain is Extracellular. A disulfide bridge connects residues cysteine 69 and cysteine 76. N-linked (GlcNAc...) asparagine glycans are attached at residues asparagine 78, asparagine 92, and asparagine 111. LRR repeat units lie at residues 80–104 (TAQV…IRYL), 105–128 (SSLL…IFDL), 130–152 (KLTT…ISKL), 154–176 (FLKV…VSRL), 177–199 (RFLE…AYGG), 200–224 (LQRL…LGLL), 225–248 (TELQ…FALL), 250–272 (NLKY…LGNL), 273–296 (SNLE…YSNL), 297–319 (KSLK…GFST), 321–344 (KNLT…IGEL), 345–368 (PELT…LGSN), 369–392 (GKLE…LCHG), 394–416 (KLYK…LTRC), 418–439 (SLWR…GFGS), 440–464 (LRNL…FATA), 466–488 (VLQY…IWKA), 511–535 (CKSF…IGHC), 536–558 (EKLL…EIST), 559–583 (LPSI…FGSS), and 585–607 (TITT…SFAH). The tract at residues 186–188 (GSY) is CLE peptide binding. The CLE peptide binding stretch occupies residues 233 to 235 (GYN). N-linked (GlcNAc...) asparagine glycosylation is found at asparagine 258 and asparagine 271. The segment at 303 to 307 (DFSSN) is CLE peptide binding. Residues asparagine 322, asparagine 332, and asparagine 356 are each glycosylated (N-linked (GlcNAc...) asparagine). The interval 375 to 377 (DVS) is CLE peptide binding. Residue asparagine 378 is glycosylated (N-linked (GlcNAc...) asparagine). Cysteine 390 and cysteine 416 are joined by a disulfide. A CLE peptide binding region spans residues 421–423 (RFR). N-linked (GlcNAc...) asparagine glycans are attached at residues asparagine 430, asparagine 442, asparagine 471, asparagine 525, and asparagine 542. Cysteines 511 and 535 form a disulfide. N-linked (GlcNAc...) asparagine glycosylation is present at asparagine 590. A disulfide bond links cysteine 620 and cysteine 628. The helical transmembrane segment at 653 to 673 (AGAIVWILAAAIGVGFFVLVA) threads the bilayer. Residues 674 to 1041 (ATRCFQKSYG…HDVKCQRIGV (368 aa)) lie on the Cytoplasmic side of the membrane. Threonine 710 is modified (phosphothreonine). The Protein kinase domain occupies 719–1001 (SKTDNILGMG…DVLLILQEAK (283 aa)). Residues 725–733 (LGMGSTGTV) and lysine 747 each bind ATP. Tyrosine 798 and tyrosine 839 each carry phosphotyrosine. Aspartate 852 acts as the Proton acceptor in catalysis. Residue serine 884 is modified to Phosphoserine. 2 positions are modified to phosphotyrosine: tyrosine 892 and tyrosine 899. Threonine 900 carries the post-translational modification Phosphothreonine.

The protein belongs to the protein kinase superfamily. Ser/Thr protein kinase family. As to quaternary structure, interacts specifically with the mature peptides CLE41p and CLE44p, especially in the presence of SERK2. Interacts with LURE1.2. As to expression, widely expressed along the vascular strands. In roots and hypocotyls, confined to procambial cells.

The protein resides in the cell membrane. It carries out the reaction L-seryl-[protein] + ATP = O-phospho-L-seryl-[protein] + ADP + H(+). It catalyses the reaction L-threonyl-[protein] + ATP = O-phospho-L-threonyl-[protein] + ADP + H(+). In terms of biological role, acts with CLE41p and CLE44p peptides as a ligand-receptor pair in a signal transduction pathway involved in the regulation of procambium maintenance and polarity during vascular-tissue development. Mediates repression of tracheary element differentiation and the promotion of procambial cells formation and polar division adjacent to phloem cells in the veins. In Arabidopsis thaliana (Mouse-ear cress), this protein is Leucine-rich repeat receptor-like protein kinase TDR.